The sequence spans 177 residues: Large ribosomal subunit protein uL6 (177 aa).

Positions 156–171 (PYKGKGVRYDTETIRR) are enriched in basic and acidic residues. Residues 156–177 (PYKGKGVRYDTETIRRKEGKKK) form a disordered region.

It belongs to the universal ribosomal protein uL6 family. Part of the 50S ribosomal subunit.

Functionally, this protein binds to the 23S rRNA, and is important in its secondary structure. It is located near the subunit interface in the base of the L7/L12 stalk, and near the tRNA binding site of the peptidyltransferase center. The polypeptide is Large ribosomal subunit protein uL6 (Gluconacetobacter diazotrophicus (strain ATCC 49037 / DSM 5601 / CCUG 37298 / CIP 103539 / LMG 7603 / PAl5)).